The following is a 226-amino-acid chain: Beta-phosphoglucomutase (226 aa).

The Nucleophile role is filled by Asp7. Residues Asp7 and Asp9 each coordinate Mg(2+). 4-aspartylphosphate is present on Asp7. The active-site Proton donor/acceptor is the Asp9. Beta-D-glucose 6-phosphate-binding residues include Asp9, Gly44, Ile45, Arg47, Ser116, Arg117, and Asn118. Asp170 is a binding site for Mg(2+).

It belongs to the HAD-like hydrolase superfamily. CbbY/CbbZ/Gph/YieH family. As to quaternary structure, homodimer. It depends on Mg(2+) as a cofactor. Autophosphorylated.

The protein localises to the cytoplasm. It catalyses the reaction beta-D-glucose 1-phosphate = beta-D-glucose 6-phosphate. Its function is as follows. Catalyzes the interconversion of D-glucose 1-phosphate (G1P) and D-glucose 6-phosphate (G6P), forming beta-D-glucose 1,6-(bis)phosphate (beta-G16P) as an intermediate. In Bacillus subtilis (strain 168), this protein is Beta-phosphoglucomutase (yvdM).